The primary structure comprises 202 residues: Mevalonate-3-phosphate 5-kinase (202 aa).

It catalyses the reaction (R)-3-phosphomevalonate + ATP = (R)-3,5-bisphosphomevalonate + ADP + H(+). It participates in isoprenoid biosynthesis; isopentenyl diphosphate biosynthesis via mevalonate pathway. In terms of biological role, phosphorylates mevalonate 3-phosphate to form mevalonate 3,5-bisphosphate. Functions in an alternative mevalonate pathway, only present in extreme acidophiles of the Thermoplasmatales order, which passes through mevalonate 3-phosphate rather than mevalonate 5-phosphate. The chain is Mevalonate-3-phosphate 5-kinase from Thermoplasma acidophilum (strain ATCC 25905 / DSM 1728 / JCM 9062 / NBRC 15155 / AMRC-C165).